The chain runs to 578 residues: Arginine--tRNA ligase (578 aa).

A 'HIGH' region motif is present at residues 127–137 (PNLAKEMHVGH).

It belongs to the class-I aminoacyl-tRNA synthetase family. Monomer.

The protein resides in the cytoplasm. The enzyme catalyses tRNA(Arg) + L-arginine + ATP = L-arginyl-tRNA(Arg) + AMP + diphosphate. This Pseudomonas fluorescens (strain SBW25) protein is Arginine--tRNA ligase.